A 519-amino-acid polypeptide reads, in one-letter code: Matrix metalloproteinase-B (519 aa).

The N-terminal stretch at 1-26 (MTKWSPNGNPLSTIYLILSLFTLAHT) is a signal peptide. A propeptide spans 27–126 (APTTQHSRTT…RQEQTKRTKR (100 aa)) (activation peptide). Polar residues predominate over residues 29 to 39 (TTQHSRTTTQL). Residues 29-50 (TTQHSRTTTQLRLEDEDGGGGV) form a disordered region. The short motif at 109–116 (PRCTQTDV) is the Cysteine switch element. Zn(2+) is bound by residues Cys111, His208, Asp210, His232, His247, and His276. Residue Glu277 is part of the active site. Zn(2+) is bound by residues His280 and His286. Asn341 is a glycosylation site (N-linked (GlcNAc...) asparagine). A compositionally biased stretch (basic and acidic residues) spans 391 to 402 (KDKRSYRGDSKI). The disordered stretch occupies residues 391–410 (KDKRSYRGDSKIPKCSSNNS). Asn408 carries N-linked (GlcNAc...) asparagine glycosylation.

Belongs to the peptidase M10A family. The cofactor is Zn(2+). As to expression, expressed in spermatheca and spermathecal-uterine valve, weakly in vulva and anal muscles and in two cells in the head (probably RMEV and RMED motor neurons).

It is found in the secreted. The protein localises to the extracellular space. The protein resides in the extracellular matrix. Its activity is regulated as follows. Inhibited by human TIMP1 and TIMP2 and the broad MMP inhibitors BB94 (Batimastat) and CT543. Functionally, metalloprotease involved in molting, a process during larval stages in which a new cuticle is formed and the old cuticle is shed. Plays a role in thermotolerance probably by preventing the accumulation of oxidized lipoproteins and cholesterol. The polypeptide is Matrix metalloproteinase-B (Caenorhabditis elegans).